The primary structure comprises 910 residues: Aconitate hydratase A (910 aa).

Positions 454, 520, and 523 each coordinate [4Fe-4S] cluster.

The protein belongs to the aconitase/IPM isomerase family. As to quaternary structure, monomer. [4Fe-4S] cluster is required as a cofactor.

The enzyme catalyses citrate = D-threo-isocitrate. The catalysed reaction is (2S,3R)-3-hydroxybutane-1,2,3-tricarboxylate = 2-methyl-cis-aconitate + H2O. The protein operates within carbohydrate metabolism; tricarboxylic acid cycle; isocitrate from oxaloacetate: step 2/2. It functions in the pathway organic acid metabolism; propanoate degradation. Involved in the catabolism of short chain fatty acids (SCFA) via the tricarboxylic acid (TCA)(acetyl degradation route) and probably the 2-methylcitrate cycle I (propionate degradation route). Catalyzes the reversible isomerization of citrate to isocitrate via cis-aconitate. Could catalyze the hydration of 2-methyl-cis-aconitate to yield (2R,3S)-2-methylisocitrate. The apo form of AcnA functions as a RNA-binding regulatory protein. The sequence is that of Aconitate hydratase A (acnA) from Pseudomonas aeruginosa (strain ATCC 15692 / DSM 22644 / CIP 104116 / JCM 14847 / LMG 12228 / 1C / PRS 101 / PAO1).